The sequence spans 576 residues: Peptidoglycan D,D-transpeptidase FtsI (576 aa).

A helical transmembrane segment spans residues 22–42 (ITILLSLIIITIILVLSRITF). The Acyl-ester intermediate role is filled by Ser-308.

Belongs to the transpeptidase family. FtsI subfamily.

The protein resides in the cell inner membrane. The enzyme catalyses Preferential cleavage: (Ac)2-L-Lys-D-Ala-|-D-Ala. Also transpeptidation of peptidyl-alanyl moieties that are N-acyl substituents of D-alanine.. It participates in cell wall biogenesis; peptidoglycan biosynthesis. Functionally, catalyzes cross-linking of the peptidoglycan cell wall at the division septum. In Buchnera aphidicola subsp. Baizongia pistaciae (strain Bp), this protein is Peptidoglycan D,D-transpeptidase FtsI.